The following is a 457-amino-acid chain: Bifunctional protein GlmU (457 aa).

A pyrophosphorylase region spans residues 1 to 229; the sequence is MYNCAIILAA…YEEIMGVNSR (229 aa). UDP-N-acetyl-alpha-D-glucosamine-binding positions include 8 to 11, lysine 22, glutamine 73, and 78 to 79; these read LAAG and GT. Position 103 (aspartate 103) interacts with Mg(2+). UDP-N-acetyl-alpha-D-glucosamine contacts are provided by glycine 140, glutamate 155, asparagine 170, and asparagine 227. Mg(2+) is bound at residue asparagine 227. Positions 230–250 are linker; the sequence is VQLSEAEIVMRKRINHKHMVN. The interval 251 to 457 is N-acetyltransferase; that stretch reads GVTFIDCEST…WLDKKGLLKK (207 aa). Residues arginine 332 and lysine 350 each coordinate UDP-N-acetyl-alpha-D-glucosamine. The Proton acceptor role is filled by histidine 362. Tyrosine 365 and asparagine 376 together coordinate UDP-N-acetyl-alpha-D-glucosamine. Acetyl-CoA-binding positions include 385-386, alanine 422, and arginine 439; that span reads NY.

In the N-terminal section; belongs to the N-acetylglucosamine-1-phosphate uridyltransferase family. It in the C-terminal section; belongs to the transferase hexapeptide repeat family. Homotrimer. Mg(2+) is required as a cofactor.

The protein localises to the cytoplasm. The catalysed reaction is alpha-D-glucosamine 1-phosphate + acetyl-CoA = N-acetyl-alpha-D-glucosamine 1-phosphate + CoA + H(+). The enzyme catalyses N-acetyl-alpha-D-glucosamine 1-phosphate + UTP + H(+) = UDP-N-acetyl-alpha-D-glucosamine + diphosphate. It participates in nucleotide-sugar biosynthesis; UDP-N-acetyl-alpha-D-glucosamine biosynthesis; N-acetyl-alpha-D-glucosamine 1-phosphate from alpha-D-glucosamine 6-phosphate (route II): step 2/2. It functions in the pathway nucleotide-sugar biosynthesis; UDP-N-acetyl-alpha-D-glucosamine biosynthesis; UDP-N-acetyl-alpha-D-glucosamine from N-acetyl-alpha-D-glucosamine 1-phosphate: step 1/1. Its pathway is bacterial outer membrane biogenesis; LPS lipid A biosynthesis. In terms of biological role, catalyzes the last two sequential reactions in the de novo biosynthetic pathway for UDP-N-acetylglucosamine (UDP-GlcNAc). The C-terminal domain catalyzes the transfer of acetyl group from acetyl coenzyme A to glucosamine-1-phosphate (GlcN-1-P) to produce N-acetylglucosamine-1-phosphate (GlcNAc-1-P), which is converted into UDP-GlcNAc by the transfer of uridine 5-monophosphate (from uridine 5-triphosphate), a reaction catalyzed by the N-terminal domain. The chain is Bifunctional protein GlmU from Clostridium botulinum (strain ATCC 19397 / Type A).